The following is a 46-amino-acid chain: Short transmembrane mitochondrial protein 1 (46 aa).

The helical transmembrane segment at 7-23 (GFTLGNVVGMYLAQNYE) threads the bilayer.

Belongs to the STMP1 family. Widely expressed. Expressed more abundantly in brain compared with other tissues such as heart, muscle and liver.

The protein resides in the mitochondrion inner membrane. It is found in the mitochondrion outer membrane. The protein localises to the mitochondrion intermembrane space. Its function is as follows. Microprotein involved in mitochondrial respiratory chain complex III (ubiquinol-cytochrome c oxidoreductase) and complex IV (mitochondrial cytochrome c oxidase complex) assembly. Required for the formation of mitochondrial supercomplexes (SCs). Also required for the activation of the NLRP3 inflammasome. In Danio rerio (Zebrafish), this protein is Short transmembrane mitochondrial protein 1.